Reading from the N-terminus, the 357-residue chain is MIPLKTIEDLISKHSILEKELSSGEVDKKLFAEKSKEYSDLNEVIDDARKYFSYEGEKKDLEKILSDSNSDNEFKEMAEVELKDLKLENETIEKKLKLFLLPKDEADKKNAIIEIRAGTGGLEASLFAADLFKMYEKVSHQKKWELELISMSQSEAGGLKEVIASIRGKNIYSTLKYESGVHRVQRVPDTETQGRVHTSAATVAVLPEAEEVDIKINDSDLRIDVFRAGGPGGQSVNTTDSAVRITHIPTGLSVSQQDQKSQHKNKAKGMLILRSRLYELERSRIEGERSEDRKSKIGTGDRSERIRTYNFPQGRVTDHRINLTLHKLEAFLEGEAFDEMVENLTLQAQEEKLSNLN.

The residue at position 234 (Gln234) is an N5-methylglutamine. The segment at 284-304 (RIEGERSEDRKSKIGTGDRSE) is disordered.

This sequence belongs to the prokaryotic/mitochondrial release factor family. Methylated by PrmC. Methylation increases the termination efficiency of RF1.

Its subcellular location is the cytoplasm. Peptide chain release factor 1 directs the termination of translation in response to the peptide chain termination codons UAG and UAA. The protein is Peptide chain release factor 1 of Pelagibacter ubique (strain HTCC1062).